Consider the following 196-residue polypeptide: Agamous-like MADS-box protein AGL27 (196 aa).

The MADS-box domain maps to 1–61 (MGRRKIEIKR…GKLYDSSSGD (61 aa)). In terms of domain architecture, K-box spans 80–170 (ALDLEEKIQN…ASQMGKNTLL (91 aa)). The disordered stretch occupies residues 175–196 (ERGMFPGSSSGNKIPETLPLLN).

Interacts with AGL39, AGL97 and AGL74. As to expression, expressed in most plant tissues, embryo, seedlings, roots, leaves, stems, inflorescence, pollen, siliques and flowers.

The protein localises to the nucleus. In terms of biological role, probable transcription factor involved in the negative regulation of flowering time in both long and short days, probably through the photoperiodic and vernalization pathways. Prevents premature flowering. The polypeptide is Agamous-like MADS-box protein AGL27 (AGL27) (Arabidopsis thaliana (Mouse-ear cress)).